The following is a 346-amino-acid chain: Phosphoribosylformylglycinamidine cyclo-ligase (346 aa).

This sequence belongs to the AIR synthase family.

It is found in the cytoplasm. It catalyses the reaction 2-formamido-N(1)-(5-O-phospho-beta-D-ribosyl)acetamidine + ATP = 5-amino-1-(5-phospho-beta-D-ribosyl)imidazole + ADP + phosphate + H(+). The protein operates within purine metabolism; IMP biosynthesis via de novo pathway; 5-amino-1-(5-phospho-D-ribosyl)imidazole from N(2)-formyl-N(1)-(5-phospho-D-ribosyl)glycinamide: step 2/2. In Bacillus cereus (strain B4264), this protein is Phosphoribosylformylglycinamidine cyclo-ligase.